The following is a 179-amino-acid chain: MSRIGNRELKIPVGLEVTIQPNNVIVKGVKGQLEQTIPSVITVVAKEGVVTTTRANDVKHSKQLHGTINSLIQGMLEGVSKGFKKELEINGVGYRAALVGDKLTLSLGYSHPVEYKIPQGITITLPKPTQIIVEGISKQLVGEVAANIRNYRKPEPYKGKGVKYKNEHIIRKEGKSAGK.

The protein belongs to the universal ribosomal protein uL6 family. As to quaternary structure, part of the 50S ribosomal subunit.

Functionally, this protein binds to the 23S rRNA, and is important in its secondary structure. It is located near the subunit interface in the base of the L7/L12 stalk, and near the tRNA binding site of the peptidyltransferase center. This Spiroplasma citri protein is Large ribosomal subunit protein uL6.